Reading from the N-terminus, the 299-residue chain is Taste receptor type 2 member 19 (299 aa).

Residue M1 is a topological domain, extracellular. Residues 2–22 (MCFLLIILSILVVFAFVLGNF) form a helical membrane-spanning segment. The Cytoplasmic portion of the chain corresponds to 23–55 (SNGFIALVNVIDWVNTRKISSADQILTALVVSR). Residues 56-76 (IGLLWVMLFLWYATVFNSALY) traverse the membrane as a helical segment. Topologically, residues 77-87 (GLEVRIVASNA) are extracellular. The helical transmembrane segment at 88-108 (WAVMNHFSIWLAASLSIFCLL) threads the bilayer. Residues 109 to 127 (KIANFSNLIFLHLKKRIKS) lie on the Cytoplasmic side of the membrane. Residues 128–148 (VVLVILLGPLVFLICNLAVIT) form a helical membrane-spanning segment. The Extracellular portion of the chain corresponds to 149–181 (MDERVWTKEYEGNVTWKIKLRNAIQLSSLTVTT). The N-linked (GlcNAc...) asparagine glycan is linked to N161. Residues 182–202 (LANLIPFTLSLICFLLLICSL) traverse the membrane as a helical segment. At 203–226 (CKHLKKMRLHSKGSQDPSTKVHIK) the chain is on the cytoplasmic side. The chain crosses the membrane as a helical span at residues 227–247 (ALQTVTSFLMLFAIYFLCIIT). Over 248-259 (STWNLRTQQSKL) the chain is Extracellular. A helical transmembrane segment spans residues 260–280 (VLLLCQTVAIMYPSFHSFILI). Residues 281–299 (MGSRKLKQTFLSVLWQMTR) lie on the Cytoplasmic side of the membrane.

Belongs to the G-protein coupled receptor T2R family.

It is found in the membrane. Receptor that may play a role in the perception of bitterness and is gustducin-linked. May play a role in sensing the chemical composition of the gastrointestinal content. The activity of this receptor may stimulate alpha gustducin, mediate PLC-beta-2 activation and lead to the gating of TRPM5. The sequence is that of Taste receptor type 2 member 19 (TAS2R19) from Pan paniscus (Pygmy chimpanzee).